Reading from the N-terminus, the 169-residue chain is Nucleoside-triphosphatase THEP1 (169 aa).

Residues 11–18 and 100–107 contribute to the ATP site; these read GEPGVGKT and IIGIDEIG.

This sequence belongs to the THEP1 NTPase family.

The catalysed reaction is a ribonucleoside 5'-triphosphate + H2O = a ribonucleoside 5'-diphosphate + phosphate + H(+). Functionally, has nucleotide phosphatase activity towards ATP, GTP, CTP, TTP and UTP. May hydrolyze nucleoside diphosphates with lower efficiency. This chain is Nucleoside-triphosphatase THEP1, found in Sulfurisphaera tokodaii (strain DSM 16993 / JCM 10545 / NBRC 100140 / 7) (Sulfolobus tokodaii).